Reading from the N-terminus, the 263-residue chain is uncharacterized protein (263 aa).

Positions M1–G22 are cleaved as a signal peptide. C23 is lipidated: N-palmitoyl cysteine. C23 carries the S-diacylglycerol cysteine lipid modification.

Belongs to the staphylococcal tandem lipoprotein family.

The protein localises to the cell membrane. This is an uncharacterized protein from Staphylococcus aureus (strain N315).